Here is a 435-residue protein sequence, read N- to C-terminus: Histidine--tRNA ligase (435 aa).

Residues 415-435 are disordered; the sequence is SVPLSAFPGDYDRPTFEDFAE. Basic and acidic residues predominate over residues 424-435; sequence DYDRPTFEDFAE.

Belongs to the class-II aminoacyl-tRNA synthetase family.

Its subcellular location is the cytoplasm. The catalysed reaction is tRNA(His) + L-histidine + ATP = L-histidyl-tRNA(His) + AMP + diphosphate + H(+). The sequence is that of Histidine--tRNA ligase from Haloarcula marismortui (strain ATCC 43049 / DSM 3752 / JCM 8966 / VKM B-1809) (Halobacterium marismortui).